The primary structure comprises 412 residues: FAD-dependent monooxygenase nscC (412 aa).

Positions 1 to 21 are cleaved as a signal peptide; that stretch reads MGKPQETILIIGAGIAGLTAS. FAD contacts are provided by Glu-35 and Ala-46. N-linked (GlcNAc...) asparagine glycosylation is found at Asn-68 and Asn-92. FAD is bound at residue Arg-119. Asn-170, Asn-231, and Asn-251 each carry an N-linked (GlcNAc...) asparagine glycan. FAD is bound by residues Asp-326 and Gly-339.

The protein belongs to the paxM FAD-dependent monooxygenase family. FAD is required as a cofactor.

It functions in the pathway secondary metabolite biosynthesis. Its function is as follows. FAD-dependent monooxygenase; part of the gene cluster that mediates the biosynthesis of neosartoricin B, a prenylated anthracenone that probably exhibits T-cell antiproliferative activity, suggestive of a physiological role as an immunosuppressive agent. The non-reducing polyketide synthase nscA probably synthesizes and cyclizes the decaketide backbone. The hydrolase nscB then mediates the product release through hydrolysis followed by spontaneous decarboxylation. The prenyltransferase nscD catalyzes the addition of the dimethylallyl group to the aromatic C5. The FAD-dependent monooxygenase nscC is then responsible for the stereospecific hydroxylation at C2. Neosartoricin B can be converted into two additional compounds neosartoricins C and D. Neosartoricin C is a spirocyclic compound that is cyclized through the attack of C3 hydroxyl on C14, followed by dehydration. On the other hand, neosartoricin D is a further cyclized compound in which attack of C2 on C14 in neosartoricin C results in the formation of the acetal-containing dioxabicyclo-octanone ring. Both of these compounds are novel and possibly represent related metabolites of the gene cluster. The polypeptide is FAD-dependent monooxygenase nscC (Trichophyton rubrum (strain ATCC MYA-4607 / CBS 118892) (Athlete's foot fungus)).